The chain runs to 166 residues: NAD(P)H-quinone oxidoreductase subunit I, chloroplastic (166 aa).

4Fe-4S ferredoxin-type domains are found at residues 55-84 (GRIH…VDWK) and 95-124 (LNYS…MTEE). Residues cysteine 64, cysteine 67, cysteine 70, cysteine 74, cysteine 104, cysteine 107, cysteine 110, and cysteine 114 each coordinate [4Fe-4S] cluster.

It belongs to the complex I 23 kDa subunit family. In terms of assembly, NDH is composed of at least 16 different subunits, 5 of which are encoded in the nucleus. [4Fe-4S] cluster is required as a cofactor.

It localises to the plastid. Its subcellular location is the chloroplast thylakoid membrane. The enzyme catalyses a plastoquinone + NADH + (n+1) H(+)(in) = a plastoquinol + NAD(+) + n H(+)(out). It carries out the reaction a plastoquinone + NADPH + (n+1) H(+)(in) = a plastoquinol + NADP(+) + n H(+)(out). Functionally, NDH shuttles electrons from NAD(P)H:plastoquinone, via FMN and iron-sulfur (Fe-S) centers, to quinones in the photosynthetic chain and possibly in a chloroplast respiratory chain. The immediate electron acceptor for the enzyme in this species is believed to be plastoquinone. Couples the redox reaction to proton translocation, and thus conserves the redox energy in a proton gradient. This chain is NAD(P)H-quinone oxidoreductase subunit I, chloroplastic, found in Calea megacephala.